Reading from the N-terminus, the 123-residue chain is MARIAGIDLPRDKRIVIGLTYIYGIGNTTAEKVLAEAGVSEDVRVRDLSPEDEDKVRAAVDKLNLTLEGDLRREVSLNIKGLQEIASYRGIRHRRGLPVRGQHTKNNARTRKGPARAIAGKKK.

Residues 94–123 (RRGLPVRGQHTKNNARTRKGPARAIAGKKK) form a disordered region.

The protein belongs to the universal ribosomal protein uS13 family. Part of the 30S ribosomal subunit. Forms a loose heterodimer with protein S19. Forms two bridges to the 50S subunit in the 70S ribosome.

In terms of biological role, located at the top of the head of the 30S subunit, it contacts several helices of the 16S rRNA. In the 70S ribosome it contacts the 23S rRNA (bridge B1a) and protein L5 of the 50S subunit (bridge B1b), connecting the 2 subunits; these bridges are implicated in subunit movement. Contacts the tRNAs in the A and P-sites. This is Small ribosomal subunit protein uS13 from Oenococcus oeni (strain ATCC BAA-331 / PSU-1).